The sequence spans 319 residues: Probable secreted beta-glucosidase C2G2.17c (319 aa).

An N-terminal signal peptide occupies residues 1-19; sequence MLFNNFLCFAVSAIPLVSA. N-linked (GlcNAc...) asparagine glycosylation is found at Asn-36, Asn-39, Asn-45, Asn-48, and Asn-221.

The protein belongs to the SUN family.

Its subcellular location is the secreted. Functionally, cell surface beta-glucosidase involved in cell wall biogenesis. In Schizosaccharomyces pombe (strain 972 / ATCC 24843) (Fission yeast), this protein is Probable secreted beta-glucosidase C2G2.17c.